A 101-amino-acid chain; its full sequence is Small ribosomal subunit protein uS14 (101 aa).

This sequence belongs to the universal ribosomal protein uS14 family. In terms of assembly, part of the 30S ribosomal subunit. Contacts proteins S3 and S10.

Its function is as follows. Binds 16S rRNA, required for the assembly of 30S particles and may also be responsible for determining the conformation of the 16S rRNA at the A site. This is Small ribosomal subunit protein uS14 from Bordetella petrii (strain ATCC BAA-461 / DSM 12804 / CCUG 43448).